A 704-amino-acid chain; its full sequence is Transcription factor HNF-4 homolog (704 aa).

The interval 93-133 (SAGGGSASSGSNNNNSMFSPNNNLSGSGSGTNSSQQQLQQQ) is disordered. A compositionally biased stretch (low complexity) spans 100-133 (SSGSNNNNSMFSPNNNLSGSGSGTNSSQQQLQQQ). The nuclear receptor DNA-binding region spans 139-214 (PTVCAICGDR…AGMKKEAVQN (76 aa)). NR C4-type zinc fingers lie at residues 142–162 (CAIC…CDGC) and 178–197 (CRFA…CRYC). The 239-residue stretch at 232-470 (GNGLSVISLV…SLLQEMLLGG (239 aa)) folds into the NR LBD domain. Disordered stretches follow at residues 474 to 520 (DNPL…GSHS), 563 to 624 (PASV…QRMH), and 684 to 704 (PAGY…ETGY). Over residues 487-512 (DYQSPTHTGNMEGGNQVNSSLDSLAT) the composition is skewed to polar residues. The span at 563–574 (PASVAPASISPP) shows a compositional bias: low complexity. A compositionally biased stretch (polar residues) spans 608 to 620 (GSRSGPLPTQHSP).

It belongs to the nuclear hormone receptor family. NR2 subfamily. Homodimer. In third instar larvae, expressed at high levels in midgut and attached gastric caeca, fat body, Malpighian tubules and oenocytes, and at lower levels in proventriculus, salivary glands, epidermis, brain and ring gland. Not detected in imaginal disks and the median neurosecretory cells that produce insulin-like peptides (at protein level). In developing embryos, expressed in mid-gut, fat bodies and the distal region of Malpighian tubules.

It is found in the nucleus. Its function is as follows. Transcriptionally controlled transcription factor. Important for the differentiation of various specialized cell types that arise from both endoderm and mesoderm. May have a role in early gut formation. Plays an essential role in lipid catabolism, regulating lipid mobilization and beta-oxidation in response to nutrient deprivation. The protein is Transcription factor HNF-4 homolog (Hnf4) of Drosophila melanogaster (Fruit fly).